A 248-amino-acid polypeptide reads, in one-letter code: 2,3-bisphosphoglycerate-dependent phosphoglycerate mutase (248 aa).

Substrate-binding positions include 8–15 (RHGESLWN), 21–22 (TG), R60, 87–90 (ERHY), K98, 114–115 (RR), and 183–184 (GN). H9 (tele-phosphohistidine intermediate) is an active-site residue. The active-site Proton donor/acceptor is E87.

Belongs to the phosphoglycerate mutase family. BPG-dependent PGAM subfamily.

It catalyses the reaction (2R)-2-phosphoglycerate = (2R)-3-phosphoglycerate. It participates in carbohydrate degradation; glycolysis; pyruvate from D-glyceraldehyde 3-phosphate: step 3/5. Functionally, catalyzes the interconversion of 2-phosphoglycerate and 3-phosphoglycerate. This Methanospirillum hungatei JF-1 (strain ATCC 27890 / DSM 864 / NBRC 100397 / JF-1) protein is 2,3-bisphosphoglycerate-dependent phosphoglycerate mutase.